Here is a 198-residue protein sequence, read N- to C-terminus: Acireductone dioxygenase (198 aa).

Fe(2+)-binding residues include histidine 97, histidine 99, glutamate 103, and histidine 141. Histidine 97, histidine 99, glutamate 103, and histidine 141 together coordinate Ni(2+).

The protein belongs to the acireductone dioxygenase (ARD) family. In terms of assembly, monomer. The cofactor is Fe(2+). Ni(2+) serves as cofactor.

It catalyses the reaction 1,2-dihydroxy-5-(methylsulfanyl)pent-1-en-3-one + O2 = 3-(methylsulfanyl)propanoate + CO + formate + 2 H(+). The enzyme catalyses 1,2-dihydroxy-5-(methylsulfanyl)pent-1-en-3-one + O2 = 4-methylsulfanyl-2-oxobutanoate + formate + 2 H(+). It functions in the pathway amino-acid biosynthesis; L-methionine biosynthesis via salvage pathway; L-methionine from S-methyl-5-thio-alpha-D-ribose 1-phosphate: step 5/6. Its function is as follows. Catalyzes 2 different reactions between oxygen and the acireductone 1,2-dihydroxy-3-keto-5-methylthiopentene (DHK-MTPene) depending upon the metal bound in the active site. Fe-containing acireductone dioxygenase (Fe-ARD) produces formate and 2-keto-4-methylthiobutyrate (KMTB), the alpha-ketoacid precursor of methionine in the methionine recycle pathway. Ni-containing acireductone dioxygenase (Ni-ARD) produces methylthiopropionate, carbon monoxide and formate, and does not lie on the methionine recycle pathway. The chain is Acireductone dioxygenase from Synechococcus elongatus (strain ATCC 33912 / PCC 7942 / FACHB-805) (Anacystis nidulans R2).